The following is a 106-amino-acid chain: Large ribosomal subunit protein P1 (106 aa).

The span at 66–76 (AQPQATQAQPA) shows a compositional bias: low complexity. The disordered stretch occupies residues 66-106 (AQPQATQAQPAAEEKKEEKKEEEKKGPSEEEIASGLASLFG). A compositionally biased stretch (basic and acidic residues) spans 77 to 93 (AEEKKEEKKEEEKKGPS).

It belongs to the eukaryotic ribosomal protein P1/P2 family. As to quaternary structure, part of the 50S ribosomal subunit. Homodimer, it forms part of the ribosomal stalk which helps the ribosome interact with GTP-bound translation factors. Forms a heptameric uL10/P0(P1)2(P1)2(P1)2 complex, where uL10/P0 forms an elongated spine to which the P1 dimers bind in a sequential fashion.

Forms part of the ribosomal stalk, playing a central role in the interaction of the ribosome with GTP-bound translation factors. The protein is Large ribosomal subunit protein P1 of Saccharolobus solfataricus (strain ATCC 35092 / DSM 1617 / JCM 11322 / P2) (Sulfolobus solfataricus).